Consider the following 690-residue polypeptide: DNA topoisomerase 1 (690 aa).

Residues 3 to 121 (DYLVIVESPA…EITKQAIKDA (119 aa)) enclose the Toprim domain. Residues E9 and D82 each coordinate Mg(2+). The Topo IA-type catalytic domain maps to 129–558 (NMDLVDAQQA…DFYKGFEERL (430 aa)). Positions 163–168 (SAGRVQ) are interaction with DNA. The O-(5'-phospho-DNA)-tyrosine intermediate role is filled by Y298. The interval 329–354 (NGTKAVKKDKKSQDAHEAIRPTSVER) is disordered. The segment covering 339 to 354 (KSQDAHEAIRPTSVER) has biased composition (basic and acidic residues). 3 consecutive C4-type zinc fingers follow at residues 579–605 (CEKC…FPDC), 619–647 (CPKC…YPEC), and 660–683 (CPKC…CSSC).

The protein belongs to the type IA topoisomerase family. Monomer. The cofactor is Mg(2+).

It catalyses the reaction ATP-independent breakage of single-stranded DNA, followed by passage and rejoining.. Its function is as follows. Releases the supercoiling and torsional tension of DNA, which is introduced during the DNA replication and transcription, by transiently cleaving and rejoining one strand of the DNA duplex. Introduces a single-strand break via transesterification at a target site in duplex DNA. The scissile phosphodiester is attacked by the catalytic tyrosine of the enzyme, resulting in the formation of a DNA-(5'-phosphotyrosyl)-enzyme intermediate and the expulsion of a 3'-OH DNA strand. The free DNA strand then undergoes passage around the unbroken strand, thus removing DNA supercoils. Finally, in the religation step, the DNA 3'-OH attacks the covalent intermediate to expel the active-site tyrosine and restore the DNA phosphodiester backbone. In Halalkalibacterium halodurans (strain ATCC BAA-125 / DSM 18197 / FERM 7344 / JCM 9153 / C-125) (Bacillus halodurans), this protein is DNA topoisomerase 1.